Here is a 919-residue protein sequence, read N- to C-terminus: Isoleucine--tRNA ligase (919 aa).

A 'HIGH' region motif is present at residues 57-67; that stretch reads PYANGHIHIGT. Residue E553 coordinates L-isoleucyl-5'-AMP. Residues 594-598 carry the 'KMSKS' region motif; the sequence is KMSKS. Residue K597 coordinates ATP. Positions 887, 890, 907, and 910 each coordinate Zn(2+).

It belongs to the class-I aminoacyl-tRNA synthetase family. IleS type 1 subfamily. In terms of assembly, monomer. It depends on Zn(2+) as a cofactor.

It localises to the cytoplasm. The enzyme catalyses tRNA(Ile) + L-isoleucine + ATP = L-isoleucyl-tRNA(Ile) + AMP + diphosphate. Functionally, catalyzes the attachment of isoleucine to tRNA(Ile). As IleRS can inadvertently accommodate and process structurally similar amino acids such as valine, to avoid such errors it has two additional distinct tRNA(Ile)-dependent editing activities. One activity is designated as 'pretransfer' editing and involves the hydrolysis of activated Val-AMP. The other activity is designated 'posttransfer' editing and involves deacylation of mischarged Val-tRNA(Ile). This Thermotoga petrophila (strain ATCC BAA-488 / DSM 13995 / JCM 10881 / RKU-1) protein is Isoleucine--tRNA ligase.